A 430-amino-acid chain; its full sequence is Enolase (430 aa).

A (2R)-2-phosphoglycerate-binding site is contributed by glutamine 164. Glutamate 206 (proton donor) is an active-site residue. Positions 243, 286, and 313 each coordinate Mg(2+). The (2R)-2-phosphoglycerate site is built by lysine 338, arginine 367, serine 368, and lysine 389. The Proton acceptor role is filled by lysine 338.

The protein belongs to the enolase family. In terms of assembly, component of the RNA degradosome, a multiprotein complex involved in RNA processing and mRNA degradation. Mg(2+) is required as a cofactor.

Its subcellular location is the cytoplasm. The protein resides in the secreted. The protein localises to the cell surface. The enzyme catalyses (2R)-2-phosphoglycerate = phosphoenolpyruvate + H2O. It functions in the pathway carbohydrate degradation; glycolysis; pyruvate from D-glyceraldehyde 3-phosphate: step 4/5. Functionally, catalyzes the reversible conversion of 2-phosphoglycerate (2-PG) into phosphoenolpyruvate (PEP). It is essential for the degradation of carbohydrates via glycolysis. This is Enolase from Dichelobacter nodosus (strain VCS1703A).